The following is a 249-amino-acid chain: Probable transcriptional regulatory protein Csal_1845 (249 aa).

It belongs to the TACO1 family.

It is found in the cytoplasm. This chain is Probable transcriptional regulatory protein Csal_1845, found in Chromohalobacter salexigens (strain ATCC BAA-138 / DSM 3043 / CIP 106854 / NCIMB 13768 / 1H11).